The sequence spans 362 residues: Peptide chain release factor 1 (362 aa).

Glutamine 237 is modified (N5-methylglutamine). Basic and acidic residues predominate over residues 285-295 (EEKRHAEEAST). The interval 285–311 (EEKRHAEEASTRRNLLGSGDRSDRIRT) is disordered.

This sequence belongs to the prokaryotic/mitochondrial release factor family. Methylated by PrmC. Methylation increases the termination efficiency of RF1.

The protein resides in the cytoplasm. In terms of biological role, peptide chain release factor 1 directs the termination of translation in response to the peptide chain termination codons UAG and UAA. This is Peptide chain release factor 1 from Photobacterium profundum (strain SS9).